Reading from the N-terminus, the 466-residue chain is 3-isopropylmalate dehydratase large subunit (466 aa).

[4Fe-4S] cluster is bound by residues C347, C407, and C410.

This sequence belongs to the aconitase/IPM isomerase family. LeuC type 1 subfamily. As to quaternary structure, heterodimer of LeuC and LeuD. It depends on [4Fe-4S] cluster as a cofactor.

It carries out the reaction (2R,3S)-3-isopropylmalate = (2S)-2-isopropylmalate. Its pathway is amino-acid biosynthesis; L-leucine biosynthesis; L-leucine from 3-methyl-2-oxobutanoate: step 2/4. Catalyzes the isomerization between 2-isopropylmalate and 3-isopropylmalate, via the formation of 2-isopropylmaleate. The chain is 3-isopropylmalate dehydratase large subunit from Shewanella sediminis (strain HAW-EB3).